We begin with the raw amino-acid sequence, 712 residues long: Patatin-like phospholipase domain-containing protein NFIA_019760 (712 aa).

A compositionally biased stretch (basic and acidic residues) spans 1-13; sequence MTSDEKSATRDIY. The tract at residues 1–21 is disordered; sequence MTSDEKSATRDIYDPNTLPDY. Residues 85 to 105 form a helical membrane-spanning segment; sequence WPFLFTVFAWITVLGFAYTLT. The PNPLA domain maps to 275–466; the sequence is LCLSGGATFA…RTDIPIKALN (192 aa). The short motif at 306–310 is the GXSXG element; the sequence is GTSGG. The active-site Nucleophile is serine 308. Aspartate 453 acts as the Proton acceptor in catalysis. The segment at 628–687 is disordered; sequence RRRQDRAEEHADRMVERLDQSFPERQSDYKDESHYTEVSDSLSATSSRPHTPDARRSSMF. Composition is skewed to basic and acidic residues over residues 632–646 and 652–664; these read DRAE…ERLD and RQSD…HYTE. Positions 665 to 676 are enriched in polar residues; the sequence is VSDSLSATSSRP. Over residues 677–687 the composition is skewed to basic and acidic residues; sequence HTPDARRSSMF.

The protein belongs to the PLPL family.

It localises to the membrane. In terms of biological role, probable lipid hydrolase. In Neosartorya fischeri (strain ATCC 1020 / DSM 3700 / CBS 544.65 / FGSC A1164 / JCM 1740 / NRRL 181 / WB 181) (Aspergillus fischerianus), this protein is Patatin-like phospholipase domain-containing protein NFIA_019760.